We begin with the raw amino-acid sequence, 472 residues long: MIRVFNTLGRRKEVFNPYSPPLVGMYVCGPTVYDYTHIGHARTFTVFDAIKRYLRLRGYDVFHVQNITDIDDKIINRAREEGRDWREIVREYSRDYLEGLGSLGIQIDHHPRVTDHISDIIRFIEGLIEKGYAYVAESGSVYFEVDKYPGYGMLSGHLSKEAWRQEEDVLHEKKSPYDFALWKAAKPGEPSWESPWGRGRPGWHIECSVMSSRYLGSRIDIHGGGVDLVFPHHENERAQSESYFGHRWVRYWLHASYLTIKGEKMSKSLGNIIPLREALREWGPGPLRLWLLSSHYRSNLDYSEEALGQYRRLYERLRQAADSIGRRLERAEPKGRLGEGELETVERLKGVVRRWHEAMSDDFNMGKAMSSLWEFTTIYFREVEQTESYTLLWLSWRILTGFNSVYAFAPDIVEARRPERSLEDSLVQALVDVRSELRRRKMYDLADEIRSRLAQLGFVLHDKGEKTEWRRR.

Cys28 is a Zn(2+) binding site. The 'HIGH' region motif lies at 30–40 (PTVYDYTHIGH). Cys207, His232, and Glu236 together coordinate Zn(2+). The 'KMSKS' region signature appears at 264-268 (KMSKS). Lys267 lines the ATP pocket.

The protein belongs to the class-I aminoacyl-tRNA synthetase family. It depends on Zn(2+) as a cofactor.

The protein localises to the cytoplasm. The catalysed reaction is tRNA(Cys) + L-cysteine + ATP = L-cysteinyl-tRNA(Cys) + AMP + diphosphate. The polypeptide is Cysteine--tRNA ligase (cysS) (Aeropyrum pernix (strain ATCC 700893 / DSM 11879 / JCM 9820 / NBRC 100138 / K1)).